The sequence spans 26 residues: ATP synthase subunit gamma, mitochondrial (26 aa).

Belongs to the ATPase gamma chain family. F-type ATPases have 2 components, CF(1) - the catalytic core - and CF(0) - the membrane proton channel. CF(1) has five subunits: alpha(3), beta(3), gamma(1), delta(1), epsilon(1). CF(0) has three main subunits: a, b and c.

The protein localises to the mitochondrion. It is found in the mitochondrion inner membrane. Mitochondrial membrane ATP synthase (F(1)F(0) ATP synthase or Complex V) produces ATP from ADP in the presence of a proton gradient across the membrane which is generated by electron transport complexes of the respiratory chain. F-type ATPases consist of two structural domains, F(1) - containing the extramembraneous catalytic core, and F(0) - containing the membrane proton channel, linked together by a central stalk and a peripheral stalk. During catalysis, ATP synthesis in the catalytic domain of F(1) is coupled via a rotary mechanism of the central stalk subunits to proton translocation. Part of the complex F(1) domain and the central stalk which is part of the complex rotary element. The gamma subunit protrudes into the catalytic domain formed of alpha(3)beta(3). Rotation of the central stalk against the surrounding alpha(3)beta(3) subunits leads to hydrolysis of ATP in three separate catalytic sites on the beta subunits. This Spinacia oleracea (Spinach) protein is ATP synthase subunit gamma, mitochondrial (ATPC).